Reading from the N-terminus, the 258-residue chain is PHD finger protein ALFIN-LIKE 1 (258 aa).

Over residues 1-10 (MDASYRRDGR) the composition is skewed to basic and acidic residues. Disordered stretches follow at residues 1 to 24 (MDAS…SAPR) and 150 to 200 (SGSR…DGDH). Positions 11–21 (GGGGGGGGGGS) are enriched in gly residues. Residues 175-187 (HTSDVARVENNIK) are compositionally biased toward basic and acidic residues. The segment covering 188-199 (EEDEGYDEDDGD) has biased composition (acidic residues). Residues 202 to 254 (ETLCGTCGGIYSADEFWIGCDVCERWYHGKCVKITPAKAESIKQYKCPSCSSK) form a PHD-type zinc finger.

It belongs to the Alfin family. Interacts with H3K4me3 and to a lesser extent with H3K4me2.

Its subcellular location is the nucleus. Functionally, histone-binding component that specifically recognizes H3 tails trimethylated on 'Lys-4' (H3K4me3), which mark transcription start sites of virtually all active genes. The chain is PHD finger protein ALFIN-LIKE 1 from Oryza sativa subsp. indica (Rice).